Consider the following 449-residue polypeptide: Na(+)/H(+) antiporter NhaA 1 (449 aa).

The next 11 membrane-spanning stretches (helical) occupy residues 32–52 (IEATSGAVLLLATVVALTLSN), 87–107 (GLMTLFFFIVALEIKREVVLG), 114–134 (MVAFSVVAAAGGMLVPMGLYL), 145–165 (GWGVVMPTDTAFVIGCLALLG), 174–194 (VFLLSLAVVDDLAAILVVAVG), 202–222 (TALALGAVGLVIIRGMALLGV), 233–253 (AIIWLAVNASGIHATIVGVIL), 318–338 (WVAFGVMPLFALANAGVSITI), 347–367 (LAVMAGFVLGKPIGVTAFAWL), 382–402 (WGGLVGGALLTGIGFTMALFI), and 417–437 (LGILAASVVSSVAGLTLLCMF).

Belongs to the NhaA Na(+)/H(+) (TC 2.A.33) antiporter family.

It is found in the cell inner membrane. It catalyses the reaction Na(+)(in) + 2 H(+)(out) = Na(+)(out) + 2 H(+)(in). In terms of biological role, na(+)/H(+) antiporter that extrudes sodium in exchange for external protons. In Acidiphilium cryptum (strain JF-5), this protein is Na(+)/H(+) antiporter NhaA 1.